We begin with the raw amino-acid sequence, 400 residues long: MTRITGISLRRVLDSRGNPTVEADVLTESGGFGRGAAPSGASTGEYEAIELPANESIAKAREHAVPRLEGVYAGDQRAVDNALRAADGTDDFSAIGANSAVAISMAAAKAAADVLGAPLYQHLGGAFRGENFPIPLGNVVGGGEHAKEATHIQEFLAAPVGAPSVSEAVFANAAVHAAVADVLDERGVPAAKGDEGAWAPPISDADAFEVVDEAVDRVEEDVGFEIRFGLDMAAAELYDDDQEAYVYGEETKSTDEQIDYVADLVDEYDLAYVEDPLDENDYEAFAELTDRVGDRTMICGDDLFVTNVERLQEGIDTGAANSILIKPNQIGTLSDTFDAIELAARNGYETIISHRSGETEDTTIAHLAVATDAGFIKTGTVGGERTAKLNELVRIADDAV.

Residue Gln153 coordinates (2R)-2-phosphoglycerate. Catalysis depends on Glu195, which acts as the Proton donor. Positions 231, 274, and 301 each coordinate Mg(2+). 4 residues coordinate (2R)-2-phosphoglycerate: Lys326, Arg355, Ser356, and Lys377. Lys326 functions as the Proton acceptor in the catalytic mechanism.

Belongs to the enolase family. The cofactor is Mg(2+).

Its subcellular location is the cytoplasm. It localises to the secreted. The protein localises to the cell surface. The catalysed reaction is (2R)-2-phosphoglycerate = phosphoenolpyruvate + H2O. It functions in the pathway carbohydrate degradation; glycolysis; pyruvate from D-glyceraldehyde 3-phosphate: step 4/5. Catalyzes the reversible conversion of 2-phosphoglycerate (2-PG) into phosphoenolpyruvate (PEP). It is essential for the degradation of carbohydrates via glycolysis. This chain is Enolase, found in Halorubrum lacusprofundi (strain ATCC 49239 / DSM 5036 / JCM 8891 / ACAM 34).